A 283-amino-acid chain; its full sequence is Pantothenate synthetase (283 aa).

Residue 26–33 (MGNLHEGH) coordinates ATP. The active-site Proton donor is His-33. Gln-57 contacts (R)-pantoate. Gln-57 serves as a coordination point for beta-alanine. 144–147 (GKKD) is an ATP binding site. Gln-150 is a (R)-pantoate binding site. 181–184 (LSSR) contacts ATP.

The protein belongs to the pantothenate synthetase family. Homodimer.

The protein localises to the cytoplasm. The enzyme catalyses (R)-pantoate + beta-alanine + ATP = (R)-pantothenate + AMP + diphosphate + H(+). The protein operates within cofactor biosynthesis; (R)-pantothenate biosynthesis; (R)-pantothenate from (R)-pantoate and beta-alanine: step 1/1. Functionally, catalyzes the condensation of pantoate with beta-alanine in an ATP-dependent reaction via a pantoyl-adenylate intermediate. This Variovorax paradoxus (strain S110) protein is Pantothenate synthetase.